The sequence spans 1046 residues: Translation initiation factor IF-2 (1046 aa).

The tract at residues 49–448 (EAFPAEGSAP…MGAMVPRGNG (400 aa)) is disordered. Positions 52 to 71 (PAEGSAPSSRPGGRPGNGAR) are enriched in low complexity. Over residues 94–111 (RPGPGGRPVPGRPGPAPL) the composition is skewed to pro residues. Low complexity-rich tracts occupy residues 112–139 (PGAS…SQPV) and 147–159 (PRPA…AAAP). Pro residues predominate over residues 160 to 176 (APAPSAPAPAPSAPAPA). Over residues 177 to 187 (PITSAPTAATP) the composition is skewed to low complexity. Over residues 188 to 206 (PAAPQRPTPGGPRPGPAAP) the composition is skewed to pro residues. A compositionally biased stretch (gly residues) spans 210–222 (RTGGPGGPGGPGG). Residues 223–235 (GPRPGPRPGPRPA) are compositionally biased toward pro residues. A compositionally biased stretch (low complexity) spans 244 to 253 (SPAAGPRAAS). 2 stretches are compositionally biased toward pro residues: residues 260–281 (SAPP…PRPG) and 304–314 (RPTPGQMPPRP). A compositionally biased stretch (low complexity) spans 320–333 (PRPNSNMFQPRPAG). Over residues 334-414 (GAPGRPGGGG…AGAFGPGGRG (81 aa)) the composition is skewed to gly residues. Residues 415–426 (RPGRQRKSKRAK) are compositionally biased toward basic residues. In terms of domain architecture, tr-type G spans 539–711 (ARPPVVTVMG…VILTADASLD (173 aa)). The tract at residues 548–555 (GHVDHGKT) is G1. 548–555 (GHVDHGKT) lines the GTP pocket. The G2 stretch occupies residues 573 to 577 (GITQH). The interval 598–601 (DTPG) is G3. GTP is bound by residues 598 to 602 (DTPGH) and 652 to 655 (NKVD). The G4 stretch occupies residues 652-655 (NKVD). The interval 688–690 (SAR) is G5.

This sequence belongs to the TRAFAC class translation factor GTPase superfamily. Classic translation factor GTPase family. IF-2 subfamily.

It localises to the cytoplasm. One of the essential components for the initiation of protein synthesis. Protects formylmethionyl-tRNA from spontaneous hydrolysis and promotes its binding to the 30S ribosomal subunits. Also involved in the hydrolysis of GTP during the formation of the 70S ribosomal complex. The sequence is that of Translation initiation factor IF-2 from Parafrankia sp. (strain EAN1pec).